A 193-amino-acid chain; its full sequence is Peptidyl-tRNA hydrolase (193 aa).

Tyr-21 serves as a coordination point for tRNA. Residue His-26 is the Proton acceptor of the active site. TRNA is bound by residues Tyr-72, Asn-74, and Asn-120.

It belongs to the PTH family. In terms of assembly, monomer.

The protein localises to the cytoplasm. The enzyme catalyses an N-acyl-L-alpha-aminoacyl-tRNA + H2O = an N-acyl-L-amino acid + a tRNA + H(+). Hydrolyzes ribosome-free peptidyl-tRNAs (with 1 or more amino acids incorporated), which drop off the ribosome during protein synthesis, or as a result of ribosome stalling. Its function is as follows. Catalyzes the release of premature peptidyl moieties from peptidyl-tRNA molecules trapped in stalled 50S ribosomal subunits, and thus maintains levels of free tRNAs and 50S ribosomes. This Nocardia farcinica (strain IFM 10152) protein is Peptidyl-tRNA hydrolase.